A 353-amino-acid chain; its full sequence is MTIALGKFTKDEKDLFDIMDDWLRRDRFVFVGWSGLLLFPCAYFALGGWFTGTTFVTSWYTHGLASSYLEGCNFLTAAVSTPANSLSHSLLLLWGPEAQGDFTRWCQLGGLWTFVALHGAFGLIGFMLRQFELARSVQLRPYNAIAFSGPIAVFVSVFLIYPLGQSGWFFAPSFGVAAIFRFILFFQGFHNWTLNPFHMMGVAGVLGAALLCAIHGATVENTLFEDGDGANTFRAFNPTQAEETYSMVTANRFWSQIFGVAFSNKRWLHFFMLFVPVTGLWMSALGVVGLALNLRAYDFVSQEIRAAEDPEFETFYTKNILLNEGIRAWMAAQDQPHENLIFPEEVLPRGNAL.

An N-acetylthreonine modification is found at threonine 2. Threonine 2 carries the phosphothreonine modification. The chain crosses the membrane as a helical span at residues 41-61 (CAYFALGGWFTGTTFVTSWYT). Position 118 (histidine 118) interacts with chlorophyll a. A helical transmembrane segment spans residues 125–141 (GFMLRQFELARSVQLRP). Glutamine 130 and asparagine 143 together coordinate pheophytin a. The helical transmembrane segment at 153 to 166 (VFVSVFLIYPLGQS) threads the bilayer. Histidine 198 provides a ligand contact to chlorophyll a. Residues 208-228 (AALLCAIHGATVENTLFEDGD) form a helical membrane-spanning segment. Residues histidine 215 and phenylalanine 262 each coordinate a plastoquinone. A Fe cation-binding site is contributed by histidine 215. Histidine 269 is a Fe cation binding site. A helical transmembrane segment spans residues 279–295 (GLWMSALGVVGLALNLR).

The protein belongs to the reaction center PufL/M/PsbA/D family. In terms of assembly, PSII is composed of 1 copy each of membrane proteins PsbA, PsbB, PsbC, PsbD, PsbE, PsbF, PsbH, PsbI, PsbJ, PsbK, PsbL, PsbM, PsbT, PsbX, PsbY, PsbZ, Psb30/Ycf12, at least 3 peripheral proteins of the oxygen-evolving complex and a large number of cofactors. It forms dimeric complexes. Requires The D1/D2 heterodimer binds P680, chlorophylls that are the primary electron donor of PSII, and subsequent electron acceptors. It shares a non-heme iron and each subunit binds pheophytin, quinone, additional chlorophylls, carotenoids and lipids. There is also a Cl(-1) ion associated with D1 and D2, which is required for oxygen evolution. The PSII complex binds additional chlorophylls, carotenoids and specific lipids. as cofactor.

Its subcellular location is the plastid. It localises to the chloroplast thylakoid membrane. The catalysed reaction is 2 a plastoquinone + 4 hnu + 2 H2O = 2 a plastoquinol + O2. Photosystem II (PSII) is a light-driven water:plastoquinone oxidoreductase that uses light energy to abstract electrons from H(2)O, generating O(2) and a proton gradient subsequently used for ATP formation. It consists of a core antenna complex that captures photons, and an electron transfer chain that converts photonic excitation into a charge separation. The D1/D2 (PsbA/PsbD) reaction center heterodimer binds P680, the primary electron donor of PSII as well as several subsequent electron acceptors. D2 is needed for assembly of a stable PSII complex. The chain is Photosystem II D2 protein from Phaseolus vulgaris (Kidney bean).